Here is a 117-residue protein sequence, read N- to C-terminus: 3',5'-cyclic-AMP phosphodiesterase 4A (117 aa).

Residues 42–79 (KQNEVEIPSPTMKDREPQEAPRQRPCQQLPPPVPHLQP) form a disordered region. The segment covering 53 to 63 (MKDREPQEAPR) has biased composition (basic and acidic residues). The interval 78 to 117 (QPMSQITGVKRLSHNSGLNNASIPRFGVKTDQEELLAQEL) is catalytic.

It belongs to the cyclic nucleotide phosphodiesterase family. PDE4 subfamily. In terms of assembly, interacts with LYN (via SH3 domain). Interacts with ARRB2. The cofactor is Zn(2+). Mg(2+) is required as a cofactor. Requires Mn(2+) as cofactor. In terms of processing, proteolytically cleaved by CASP3.

It localises to the cytoplasm. The protein localises to the cytosol. The protein resides in the membrane. The catalysed reaction is 3',5'-cyclic AMP + H2O = AMP + H(+). It functions in the pathway purine metabolism; 3',5'-cyclic AMP degradation; AMP from 3',5'-cyclic AMP: step 1/1. In terms of biological role, hydrolyzes the second messenger 3',5'-cyclic AMP (cAMP), which is a key regulator of many important physiological processes. The polypeptide is 3',5'-cyclic-AMP phosphodiesterase 4A (PDE4A) (Cavia porcellus (Guinea pig)).